A 125-amino-acid polypeptide reads, in one-letter code: Protein ApaG (125 aa).

The region spanning 1–125 (MIDSPRVCVQ…FRLAVPTFIH (125 aa)) is the ApaG domain.

This Enterobacter sp. (strain 638) protein is Protein ApaG.